The sequence spans 427 residues: 3-phosphoshikimate 1-carboxyvinyltransferase (427 aa).

3-phosphoshikimate contacts are provided by Lys20, Ser21, and Arg25. Lys20 lines the phosphoenolpyruvate pocket. Gly92 and Arg120 together coordinate phosphoenolpyruvate. Ser166, Gln168, Asp312, and Lys339 together coordinate 3-phosphoshikimate. A phosphoenolpyruvate-binding site is contributed by Gln168. The active-site Proton acceptor is Asp312. Residues Arg343 and Arg385 each coordinate phosphoenolpyruvate.

It belongs to the EPSP synthase family. As to quaternary structure, monomer.

It is found in the cytoplasm. It carries out the reaction 3-phosphoshikimate + phosphoenolpyruvate = 5-O-(1-carboxyvinyl)-3-phosphoshikimate + phosphate. It functions in the pathway metabolic intermediate biosynthesis; chorismate biosynthesis; chorismate from D-erythrose 4-phosphate and phosphoenolpyruvate: step 6/7. Catalyzes the transfer of the enolpyruvyl moiety of phosphoenolpyruvate (PEP) to the 5-hydroxyl of shikimate-3-phosphate (S3P) to produce enolpyruvyl shikimate-3-phosphate and inorganic phosphate. This Streptococcus pneumoniae (strain 70585) protein is 3-phosphoshikimate 1-carboxyvinyltransferase.